The chain runs to 467 residues: Argininosuccinate lyase (467 aa).

The protein belongs to the lyase 1 family. Argininosuccinate lyase subfamily.

It localises to the cytoplasm. The enzyme catalyses 2-(N(omega)-L-arginino)succinate = fumarate + L-arginine. The protein operates within amino-acid biosynthesis; L-arginine biosynthesis; L-arginine from L-ornithine and carbamoyl phosphate: step 3/3. This Rhizobium johnstonii (strain DSM 114642 / LMG 32736 / 3841) (Rhizobium leguminosarum bv. viciae) protein is Argininosuccinate lyase.